We begin with the raw amino-acid sequence, 717 residues long: uncharacterized protein (717 aa).

This sequence belongs to the asfivirus C717R family.

It localises to the virion. This is an uncharacterized protein from African swine fever virus (isolate Tick/Malawi/Lil 20-1/1983) (ASFV).